Here is a 150-residue protein sequence, read N- to C-terminus: Small ribosomal subunit protein uS11 (150 aa).

Residues 130–150 (DVTPIPSDSTRRKSGRRGRRL) form a disordered region. Residues 141 to 150 (RKSGRRGRRL) show a composition bias toward basic residues.

The protein belongs to the universal ribosomal protein uS11 family.

This is Small ribosomal subunit protein uS11 (RPS14) from Lupinus luteus (European yellow lupine).